Here is an 86-residue protein sequence, read N- to C-terminus: Neuropeptide-like 2 (86 aa).

An N-terminal signal peptide occupies residues 1 to 19 (MAKLAICILVFALFALALS). Propeptides lie at residues 20–34 (ARVPREESNPAQEFL) and 45–86 (IEKL…AAST).

In terms of tissue distribution, hemolymph (at protein level).

It localises to the secreted. This is Neuropeptide-like 2 (Nplp2) from Drosophila melanogaster (Fruit fly).